The sequence spans 488 residues: Probable 26S proteasome non-ATPase regulatory subunit 3 (488 aa).

Positions 1–20 are disordered; the sequence is MTQDVEMKEQAAPPSNSLSS. The region spanning 240–421 is the PCI domain; the sequence is SRYLFYLGKI…GWMVSKETGD (182 aa). The disordered stretch occupies residues 452 to 488; the sequence is FPPNSHKEKESAEKRRERQQQEQELAKHIAEEDDDDF. The segment covering 456–481 has biased composition (basic and acidic residues); that stretch reads SHKEKESAEKRRERQQQEQELAKHIA.

This sequence belongs to the proteasome subunit S3 family. The 26S proteasome is composed of a core protease, known as the 20S proteasome, capped at one or both ends by the 19S regulatory complex (RC). The RC is composed of at least 18 different subunits in two subcomplexes, the base and the lid, which form the portions proximal and distal to the 20S proteolytic core, respectively.

It localises to the nucleus. Its function is as follows. Acts as a regulatory subunit of the 26 proteasome which is involved in the ATP-dependent degradation of ubiquitinated proteins. In Nicotiana tabacum (Common tobacco), this protein is Probable 26S proteasome non-ATPase regulatory subunit 3 (21D7).